The following is a 150-amino-acid chain: 3-hydroxyacyl-[acyl-carrier-protein] dehydratase FabZ (150 aa).

Histidine 51 is a catalytic residue.

The protein belongs to the thioester dehydratase family. FabZ subfamily.

It localises to the cytoplasm. It carries out the reaction a (3R)-hydroxyacyl-[ACP] = a (2E)-enoyl-[ACP] + H2O. Its function is as follows. Involved in unsaturated fatty acids biosynthesis. Catalyzes the dehydration of short chain beta-hydroxyacyl-ACPs and long chain saturated and unsaturated beta-hydroxyacyl-ACPs. This Legionella pneumophila (strain Lens) protein is 3-hydroxyacyl-[acyl-carrier-protein] dehydratase FabZ.